Consider the following 59-residue polypeptide: UPF0434 protein Mmc1_0910 (59 aa).

It belongs to the UPF0434 family.

In Magnetococcus marinus (strain ATCC BAA-1437 / JCM 17883 / MC-1), this protein is UPF0434 protein Mmc1_0910.